Here is a 384-residue protein sequence, read N- to C-terminus: 8-amino-7-oxononanoate synthase (384 aa).

Arginine 21 provides a ligand contact to substrate. 108–109 (GF) contributes to the pyridoxal 5'-phosphate binding site. A substrate-binding site is contributed by histidine 133. Residues serine 179, histidine 207, and threonine 233 each coordinate pyridoxal 5'-phosphate. Lysine 236 is modified (N6-(pyridoxal phosphate)lysine). Position 352 (threonine 352) interacts with substrate.

It belongs to the class-II pyridoxal-phosphate-dependent aminotransferase family. BioF subfamily. In terms of assembly, homodimer. Requires pyridoxal 5'-phosphate as cofactor.

The enzyme catalyses 6-carboxyhexanoyl-[ACP] + L-alanine + H(+) = (8S)-8-amino-7-oxononanoate + holo-[ACP] + CO2. Its pathway is cofactor biosynthesis; biotin biosynthesis. Catalyzes the decarboxylative condensation of pimeloyl-[acyl-carrier protein] and L-alanine to produce 8-amino-7-oxononanoate (AON), [acyl-carrier protein], and carbon dioxide. The polypeptide is 8-amino-7-oxononanoate synthase (Escherichia coli O8 (strain IAI1)).